Consider the following 249-residue polypeptide: 5'-nucleotidase SurE (249 aa).

Positions 8, 9, 39, and 91 each coordinate a divalent metal cation.

The protein belongs to the SurE nucleotidase family. Requires a divalent metal cation as cofactor.

It is found in the cytoplasm. The enzyme catalyses a ribonucleoside 5'-phosphate + H2O = a ribonucleoside + phosphate. Nucleotidase that shows phosphatase activity on nucleoside 5'-monophosphates. This chain is 5'-nucleotidase SurE, found in Haemophilus influenzae (strain PittEE).